Consider the following 77-residue polypeptide: uncharacterized protein (77 aa).

It to E.coli YdfK.

This is an uncharacterized protein from Escherichia coli (strain K12).